We begin with the raw amino-acid sequence, 48 residues long: Lantibiotic salivaricin-A (48 aa).

Positions 1–26 are excised as a propeptide; that stretch reads MKNSKDILNNAIEEVSEKELMEVAGG. 2 cross-links (beta-methyllanthionine (Thr-Cys)) span residues 35 to 40 and 37 to 47; these read TITDDC and TDDCPNSVFVC. Residues 43–48 constitute a cross-link (lanthionine (Ser-Cys)); it reads SVFVCC.

Belongs to the type A lantibiotic family. Maturation of lantibiotics involves the enzymatic conversion of Thr, and Ser into dehydrated AA and the formation of thioether bonds with cysteine. This is followed by membrane translocation and cleavage of the modified precursor.

Its function is as follows. Lanthionine-containing peptide antibiotic (lantibiotic) active on Gram-positive bacteria. The bactericidal activity of lantibiotics is based on depolarization of energized bacterial cytoplasmic membranes, initiated by the formation of aqueous transmembrane pores. The protein is Lantibiotic salivaricin-A (salA) of Streptococcus salivarius.